The following is a 324-amino-acid chain: Phospho-N-acetylmuramoyl-pentapeptide-transferase (324 aa).

A run of 10 helical transmembrane segments spans residues 9–29 (TFAVAFIITVIGVPLFIPFLV), 53–73 (TMGAVVFITAMLISFLVFSFI), 77–97 (VSAATWLLFIALALFGALGFL), 117–137 (FLGQVVISILFYLVYHFNDFA), 147–167 (IEVDLGWFFVIFILFWLVGFS), 176–196 (LDGLVSGLSVIAFSAFGVIAF), 201–221 (MDVAIFCFAIVGGMLGFLLFN), 227–247 (IFMGDTGSLALGGSIAAISIL), 253–273 (LLLLIGIIFVIETASVILQVF), and 304–324 (VLTFWGIGLVGAIISVCVVIF).

The protein belongs to the glycosyltransferase 4 family. MraY subfamily. Mg(2+) is required as a cofactor.

It is found in the cell membrane. The enzyme catalyses UDP-N-acetyl-alpha-D-muramoyl-L-alanyl-gamma-D-glutamyl-meso-2,6-diaminopimeloyl-D-alanyl-D-alanine + di-trans,octa-cis-undecaprenyl phosphate = di-trans,octa-cis-undecaprenyl diphospho-N-acetyl-alpha-D-muramoyl-L-alanyl-D-glutamyl-meso-2,6-diaminopimeloyl-D-alanyl-D-alanine + UMP. It functions in the pathway cell wall biogenesis; peptidoglycan biosynthesis. Functionally, catalyzes the initial step of the lipid cycle reactions in the biosynthesis of the cell wall peptidoglycan: transfers peptidoglycan precursor phospho-MurNAc-pentapeptide from UDP-MurNAc-pentapeptide onto the lipid carrier undecaprenyl phosphate, yielding undecaprenyl-pyrophosphoryl-MurNAc-pentapeptide, known as lipid I. The polypeptide is Phospho-N-acetylmuramoyl-pentapeptide-transferase (Listeria monocytogenes serovar 1/2a (strain ATCC BAA-679 / EGD-e)).